We begin with the raw amino-acid sequence, 563 residues long: Cytochrome P450 monooxygenase efuG (563 aa).

A helical transmembrane segment spans residues 10–30; sequence ITSHQWGIGSVFLLISIPLIV. The disordered stretch occupies residues 462–482; the sequence is PDDPQSGPRKDAKKQKAKSDG. Residue Cys505 participates in heme binding.

It belongs to the cytochrome P450 family. Requires heme as cofactor.

It localises to the membrane. It participates in secondary metabolite biosynthesis; terpenoid biosynthesis. Functionally, cytochrome P450 monooxygenase; part of the gene cluster that mediates the biosynthesis of enfumafungin, a glycosylated fernene-type triterpenoid with potent antifungal activity, mediated by its interaction with beta-1,3-glucan synthase and the fungal cell wall. The pathway begins with the terpene cyclase-glycosyl transferase fusion protein that most likely uses 2,3-oxidosqualene as substrate and catalyzes glycosylation immediately after cyclization. The fernene glycoside then could be processed by the desaturase efuI which catalyzes isomerization of a double bond established by efuA to form the core structure. The latter would then undergo a series of hydroxylations in unknown order at C-2, C-19, C-23 and C-25, which would be catalyzed by two of the three cytochrome P450 monooxygenases efuB, efuG or efuH. The hydroxy-group at C-25 becomes oxidized by the dehydrogenase efuE to enable a spontaneous, non-enzymatic hemiacetal formation with C-23. After hydroxylation at C-2, acetylation by the acetyltransferase efuC takes place. The final steps in enfumafungin biosynthesis require expansion of the 5-membered ring by lactonization via a Baeyer-Villiger reaction mediated by one of the BGC's cytochrome P450 monooxygenases (efuB, efuG or efuH) followed by ring cleavage. This type of reaction would establish a double bond between C-20 and C-21 which could be reduced by the reductase efuL to form the final product. This Hormonema carpetanum protein is Cytochrome P450 monooxygenase efuG.